Reading from the N-terminus, the 682-residue chain is Penicillin-binding protein activator LpoA (682 aa).

The N-terminal stretch at 1-26 (MLSSITVRTKSGRLIPLVLAATLLAA) is a signal peptide. Cys27 is lipidated: N-palmitoyl cysteine. Cys27 is lipidated: S-diacylglycerol cysteine.

This sequence belongs to the LpoA family. In terms of assembly, interacts with PBP1a.

The protein resides in the cell outer membrane. Its function is as follows. Regulator of peptidoglycan synthesis that is essential for the function of penicillin-binding protein 1A (PBP1a). The protein is Penicillin-binding protein activator LpoA of Edwardsiella ictaluri (strain 93-146).